The chain runs to 336 residues: Anthranilate phosphoribosyltransferase (336 aa).

5-phospho-alpha-D-ribose 1-diphosphate is bound by residues glycine 82, 85 to 86, threonine 90, 92 to 95, 110 to 118, and serine 122; these read GD, NIST, and KHGNRSVSS. Residue glycine 82 participates in anthranilate binding. Serine 94 provides a ligand contact to Mg(2+). Asparagine 113 lines the anthranilate pocket. Residue arginine 168 participates in anthranilate binding. Residues aspartate 227 and glutamate 228 each coordinate Mg(2+).

Belongs to the anthranilate phosphoribosyltransferase family. In terms of assembly, homodimer. The cofactor is Mg(2+).

The catalysed reaction is N-(5-phospho-beta-D-ribosyl)anthranilate + diphosphate = 5-phospho-alpha-D-ribose 1-diphosphate + anthranilate. Its pathway is amino-acid biosynthesis; L-tryptophan biosynthesis; L-tryptophan from chorismate: step 2/5. Catalyzes the transfer of the phosphoribosyl group of 5-phosphorylribose-1-pyrophosphate (PRPP) to anthranilate to yield N-(5'-phosphoribosyl)-anthranilate (PRA). This is Anthranilate phosphoribosyltransferase from Leptospira interrogans serogroup Icterohaemorrhagiae serovar Lai (strain 56601).